A 230-amino-acid chain; its full sequence is MAREGKRLKSAYADIDRDKFYSLADAVKAIKTRAVAKFDETIEIALNLGVDPRHADQMVRGVVELPHGTGKTVRVAVFAKGDKAEEARKAGADIVGEQDLFDACNAGNMDFDRVIATPDLMGLVGRLGKVLGPRGLMPNPKLGTVTANVTEAVRAAKAGQVQFRVEKAGIVHAGIGKASFSEEKLAENVKAFVDAITKAKPQGAKGTYLKKVSLSSTMGPGVKLDVATLA.

It belongs to the universal ribosomal protein uL1 family. As to quaternary structure, part of the 50S ribosomal subunit.

In terms of biological role, binds directly to 23S rRNA. The L1 stalk is quite mobile in the ribosome, and is involved in E site tRNA release. Its function is as follows. Protein L1 is also a translational repressor protein, it controls the translation of the L11 operon by binding to its mRNA. In Paramagnetospirillum magneticum (strain ATCC 700264 / AMB-1) (Magnetospirillum magneticum), this protein is Large ribosomal subunit protein uL1.